The primary structure comprises 480 residues: Probable pectin lyase F-2 (480 aa).

An N-terminal signal peptide occupies residues 1-25; sequence MTLIRTVLMAAALLGASAHAQGVVG. A disulfide bridge links C83 with C106. N111 is a glycosylation site (N-linked (GlcNAc...) asparagine). R256 is a catalytic residue. C322 and C330 are oxidised to a cystine. The segment covering 386 to 401 has biased composition (low complexity); sequence SSSAIPSSTPAPSSSA. The tract at residues 386-436 is disordered; it reads SSSAIPSSTPAPSSSALAKRHGGHDRHGLGHIPHLTEGGPGAWHTPGPAPS.

This sequence belongs to the polysaccharide lyase 1 family.

It is found in the secreted. It catalyses the reaction Eliminative cleavage of (1-&gt;4)-alpha-D-galacturonan methyl ester to give oligosaccharides with 4-deoxy-6-O-methyl-alpha-D-galact-4-enuronosyl groups at their non-reducing ends.. Pectinolytic enzymes consist of four classes of enzymes: pectin lyase, polygalacturonase, pectin methylesterase and rhamnogalacturonase. Among pectinolytic enzymes, pectin lyase is the most important in depolymerization of pectin, since it cleaves internal glycosidic bonds of highly methylated pectins. This is Probable pectin lyase F-2 (pelF-2) from Aspergillus terreus (strain NIH 2624 / FGSC A1156).